The chain runs to 142 residues: MARYKLLLLLAVWVLTGELWPGAEARAAPYGVRLCGREFIRAVIFTCGGSRWRRSDILAHEAMGDTFPDADADGDSLAGELDEAMGSSEWLALTKSPQAFYRGRPSWQGTPGALRGSRDVLAGLSSSCCKWGCSKSEISSLC.

The signal sequence occupies residues 1-25 (MARYKLLLLLAVWVLTGELWPGAEA). 3 cysteine pairs are disulfide-bonded: cysteine 35–cysteine 129, cysteine 47–cysteine 142, and cysteine 128–cysteine 133. Residues 55 to 118 (SDILAHEAMG…GTPGALRGSR (64 aa)) constitute a propeptide, connecting peptide.

This sequence belongs to the insulin family. In terms of assembly, heterodimer of a B chain and an A chain linked by two disulfide bonds.

Its subcellular location is the secreted. In terms of biological role, may play a role in neuropeptide signaling processes. Ligand for LGR7, RXFP3 and RXFP4. This chain is Relaxin-3 (RLN3), found in Pan troglodytes (Chimpanzee).